Here is a 757-residue protein sequence, read N- to C-terminus: RNA-directed RNA polymerase catalytic subunit (757 aa).

The segment at 52–82 (RGKWTTNTETGAPQLNPIDGPLPEDNEPSGY) is disordered. Residues 55 to 64 (WTTNTETGAP) are compositionally biased toward polar residues. 2 consecutive short sequence motifs (nuclear localization signal) follow at residues 187–195 (RKRRVRDNM) and 203–216 (RTIG…NKRS). The tract at residues 249 to 256 (RGFVYFVE) is promoter-binding site. Positions 286-483 (VRKMMTNSQD…GINMSKKKSY (198 aa)) constitute a RdRp catalytic domain.

It belongs to the influenza viruses polymerase PB1 family. As to quaternary structure, influenza RNA polymerase is composed of three subunits: PB1, PB2 and PA. Interacts (via N-terminus) with PA (via C-terminus). Interacts (via C-terminus) with PB2 (via N-terminus); this interaction is essential for transcription initiation. In terms of processing, phosphorylated by host PRKCA.

The protein localises to the host nucleus. It localises to the host cytoplasm. It carries out the reaction RNA(n) + a ribonucleoside 5'-triphosphate = RNA(n+1) + diphosphate. Functionally, RNA-dependent RNA polymerase which is responsible for replication and transcription of virus RNA segments. The transcription of viral mRNAs occurs by a unique mechanism called cap-snatching. 5' methylated caps of cellular mRNAs are cleaved after 10-13 nucleotides by PA. In turn, these short capped RNAs are used as primers by PB1 for transcription of viral mRNAs. During virus replication, PB1 initiates RNA synthesis and copy vRNA into complementary RNA (cRNA) which in turn serves as a template for the production of more vRNAs. The polypeptide is RNA-directed RNA polymerase catalytic subunit (Aves (Human)).